A 61-amino-acid polypeptide reads, in one-letter code: Small ribosomal subunit protein bS21 (61 aa).

A disordered region spans residues 40-61 (KPSVKRKKKSEAARKRKNKRRF). Over residues 43–61 (VKRKKKSEAARKRKNKRRF) the composition is skewed to basic residues.

Belongs to the bacterial ribosomal protein bS21 family.

The sequence is that of Small ribosomal subunit protein bS21 from Ligilactobacillus salivarius (strain UCC118) (Lactobacillus salivarius).